The primary structure comprises 251 residues: CDP-diacylglycerol pyrophosphatase (251 aa).

A helical transmembrane segment spans residues 4 to 24; that stretch reads AGLLFLVMIVIAVVAAGIGYW.

Belongs to the Cdh family.

The protein localises to the cell inner membrane. It catalyses the reaction a CDP-1,2-diacyl-sn-glycerol + H2O = a 1,2-diacyl-sn-glycero-3-phosphate + CMP + 2 H(+). It functions in the pathway phospholipid metabolism; CDP-diacylglycerol degradation; phosphatidate from CDP-diacylglycerol: step 1/1. This Escherichia coli (strain ATCC 8739 / DSM 1576 / NBRC 3972 / NCIMB 8545 / WDCM 00012 / Crooks) protein is CDP-diacylglycerol pyrophosphatase.